Consider the following 942-residue polypeptide: MSTAEASATTADAAEAGGRTKTGSPRTIPVFGVAIPDGEMQGIFKPMDLNRIIKVLEEEDKDVSEEKQLNYIKKLIHCYQNGFPLRDLAQIFKILSLCAEKIEKQPCFVEPASDIIKLCGLPFLKKKVSDEITYTEDTANSFALLGELMKIPSSALRIQICKCIVDFYHAEPLKKHIPGYQQVSSSYKIKMVEVGGLAKAMVQSALLLENQLVEKLWVLKVLQHLSTSGVNCTLMVKAQAASGICAHLNDPDPSGQLLFRSSEVLWNLLEKSSKEEIIQQLSNLECLLALKEVFKNLFVRGHSHYERQLRNDILVITTIIAQNPGAPMIECGFTRDLILFATFNEVKSQNPLVKSLKLFNCYEDFELKKLLFNIIVILCKDLATVQLLIDGKVILALFTYVKKPERLKIMEWSAAQYEELQLHAIATLSSVAPLLIEEYMSCHGNSRILAFLEWCGHEDSYFIHGNSFHGTGGRGNKFAQMRYTLRLLRAMVYLEDETVNKDLCERGVIHQLIEIFKTMMSRPAEKEEAIALEIQSDTLLILSGLCENYIQRKEMFGTEGVDIVLHVMKTDPKNLQRGLGYNVLLFSTLDSIWCCILGCYDSEDYFLEKEGIFLLLDILALNQKKFCNLILGIMVEFCDNPKTSAHVNAWRGKKDLTAASLLIKLWRKEEKELGVKRDRNGKIVDTKRPLFTSFQEEQKTMPLPANCPSIAVMDVAENIRAKIYAVLDKLDFENLPGLSAEDFVTLCIIHRYFDFKIGEIWNEVSEEIKLEKLRLVTTDEKSLNSIIAATENIGKMVASLQSEMIENQALQDVQNEQRVYAKIQATHKQREQANKSWENFLARTSNAKTLKKAKKLQEKAIESSRYTERPQNATFHQTVIKGLNTTVPSGRVVTVQSTPTRLLGGPLADTDIALKKLPIRGGALQRVKVKPPLNDPKKSIPT.

Residues 1–16 (MSTAEASATTADAAEA) show a composition bias toward low complexity. Residues 1-25 (MSTAEASATTADAAEAGGRTKTGSP) are disordered.

Expressed in ciliated olfactory sensory neurons (at protein level). Expressed in testis, specifically in sperm (at protein level).

It localises to the cell projection. It is found in the cilium. Its subcellular location is the flagellum. Functionally, cilium- and flagellum-associated protein. In the olfactory epithelium, regulates the speed of activation and termination of the odor response and thus contributes to the robustness of olfactory transduction pathways. Required for sperm flagellum assembly and stability. In Mus musculus (Mouse), this protein is Cilia- and flagella-associated protein 69.